The primary structure comprises 510 residues: Protein HGV2 (510 aa).

Residues 95–227 are disordered; that stretch reads GVPEEDADGD…KENESEEDPD (133 aa). A compositionally biased stretch (acidic residues) spans 98–110; the sequence is EEDADGDSDQEQE. Composition is skewed to basic and acidic residues over residues 111–129 and 142–199; these read QFEK…REEV and EERG…DKPV. A compositionally biased stretch (low complexity) spans 204–217; it reads TEEPGTSGTSASSS. TPR repeat units follow at residues 260–293 and 302–335; these read AQCH…QKDL and AETY…LEAR. A disordered region spans residues 391-510; sequence DGSPFRQASE…TPKKDAAKRR (120 aa). A compositionally biased stretch (low complexity) spans 398–411; the sequence is ASEGESSSGLGAST. 2 short sequence motifs (nuclear localization signal) span residues 444-451 and 465-471; these read VRRKRPSP and SKKAKQE. Over residues 459–471 the composition is skewed to basic and acidic residues; it reads ESKENESKKAKQE.

The protein belongs to the NASP family. As to expression, embryo and larvae.

It is found in the nucleus. Functionally, may function as a nucleosome assembly factor during rapid embryonic cell divisions. The polypeptide is Protein HGV2 (HGV2) (Halocynthia roretzi (Sea squirt)).